A 195-amino-acid chain; its full sequence is dITP/XTP pyrophosphatase (195 aa).

A substrate-binding site is contributed by serine 8 to lysine 13. Residues glutamate 39 and aspartate 68 each coordinate Mg(2+). The Proton acceptor role is filled by aspartate 68. Substrate is bound by residues serine 69, phenylalanine 149 to aspartate 152, lysine 172, and histidine 177 to arginine 178.

This sequence belongs to the HAM1 NTPase family. In terms of assembly, homodimer. Mg(2+) is required as a cofactor.

The catalysed reaction is XTP + H2O = XMP + diphosphate + H(+). It catalyses the reaction dITP + H2O = dIMP + diphosphate + H(+). It carries out the reaction ITP + H2O = IMP + diphosphate + H(+). In terms of biological role, pyrophosphatase that catalyzes the hydrolysis of nucleoside triphosphates to their monophosphate derivatives, with a high preference for the non-canonical purine nucleotides XTP (xanthosine triphosphate), dITP (deoxyinosine triphosphate) and ITP. Seems to function as a house-cleaning enzyme that removes non-canonical purine nucleotides from the nucleotide pool, thus preventing their incorporation into DNA/RNA and avoiding chromosomal lesions. In Staphylococcus aureus (strain COL), this protein is dITP/XTP pyrophosphatase.